The primary structure comprises 772 residues: Ion-translocating oxidoreductase complex subunit C (772 aa).

4Fe-4S ferredoxin-type domains lie at glycine 369–tyrosine 397 and lysine 407–phenylalanine 436. 8 residues coordinate [4Fe-4S] cluster: cysteine 377, cysteine 380, cysteine 383, cysteine 387, cysteine 416, cysteine 419, cysteine 422, and cysteine 426. Positions lysine 599–lysine 748 are disordered.

Belongs to the 4Fe4S bacterial-type ferredoxin family. RnfC subfamily. The complex is composed of six subunits: RsxA, RsxB, RsxC, RsxD, RsxE and RsxG. Requires [4Fe-4S] cluster as cofactor.

The protein resides in the cell inner membrane. Functionally, part of a membrane-bound complex that couples electron transfer with translocation of ions across the membrane. Required to maintain the reduced state of SoxR. This chain is Ion-translocating oxidoreductase complex subunit C, found in Shigella dysenteriae serotype 1 (strain Sd197).